We begin with the raw amino-acid sequence, 373 residues long: MKRLAVLGSTGSIGTQTLDIVRKYRDRLEVSLLAASRVSEKLLDQIDEFKPEYVYIAEGEKIKGVKTLIGEDGLYKLAQLDIDLFINGISGINGILPTYLLLENNKKLATANKEAIICLGEIYGDKYSDIFPIDSEHSAIFQCLLSGRKEEVEKIILTASGGPFLNLPKEEFRYITPDQALNHPRWKMGKKVSIDSATLMNKGFEIIEAHYLFNIPYSKIDVVIHPESIVHGLVQFIDGSVISHLSPPDMRIPICYAISYPERWEIDVRRLNLAQVKNLTFLEPDYDRFPLLNIAKECGEKGGACPTVLTTADEIAVNLFLEGKITFDMIPVYIQQVLDQADFSKPETFEDIIFIIKETEKIFWNILKLQNVN.

Residues Thr-10, Gly-11, Ser-12, Ile-13, Arg-37, and Asn-112 each contribute to the NADPH site. Position 113 (Lys-113) interacts with 1-deoxy-D-xylulose 5-phosphate. Glu-114 is an NADPH binding site. Asp-134 is a binding site for Mn(2+). Ser-135, Glu-136, Ser-160, and His-183 together coordinate 1-deoxy-D-xylulose 5-phosphate. Glu-136 is a Mn(2+) binding site. Gly-189 serves as a coordination point for NADPH. Residues Ser-196, Asn-201, Lys-202, and Glu-205 each contribute to the 1-deoxy-D-xylulose 5-phosphate site. A Mn(2+)-binding site is contributed by Glu-205.

This sequence belongs to the DXR family. The cofactor is Mg(2+). Requires Mn(2+) as cofactor.

It carries out the reaction 2-C-methyl-D-erythritol 4-phosphate + NADP(+) = 1-deoxy-D-xylulose 5-phosphate + NADPH + H(+). It participates in isoprenoid biosynthesis; isopentenyl diphosphate biosynthesis via DXP pathway; isopentenyl diphosphate from 1-deoxy-D-xylulose 5-phosphate: step 1/6. In terms of biological role, catalyzes the NADPH-dependent rearrangement and reduction of 1-deoxy-D-xylulose-5-phosphate (DXP) to 2-C-methyl-D-erythritol 4-phosphate (MEP). The chain is 1-deoxy-D-xylulose 5-phosphate reductoisomerase from Persephonella marina (strain DSM 14350 / EX-H1).